The chain runs to 104 residues: Pole-localizer protein TmaR (104 aa).

Coiled coils occupy residues isoleucine 7–arginine 34 and serine 76–glutamate 96.

The protein belongs to the pole-localizer TmaR family.

Its subcellular location is the cytoplasm. Pole-localizer protein involved in the regulation of several cellular processes. The chain is Pole-localizer protein TmaR from Vibrio campbellii (strain ATCC BAA-1116).